The following is a 369-amino-acid chain: Molybdenum import ATP-binding protein ModC (369 aa).

An ABC transporter domain is found at 7–243; it reads PGQAGIHARF…LDLPMAMTDD (237 aa). 41 to 48 provides a ligand contact to ATP; sequence GQSGSGKT. The Mop domain occupies 304 to 369; it reads EGSILNVLAV…AQIKAVSLLA (66 aa).

It belongs to the ABC transporter superfamily. Molybdate importer (TC 3.A.1.8) family. The complex is composed of two ATP-binding proteins (ModC), two transmembrane proteins (ModB) and a solute-binding protein (ModA).

The protein localises to the cell inner membrane. The enzyme catalyses molybdate(out) + ATP + H2O = molybdate(in) + ADP + phosphate + H(+). In terms of biological role, part of the ABC transporter complex ModABC involved in molybdenum import. Responsible for energy coupling to the transport system. The protein is Molybdenum import ATP-binding protein ModC of Bordetella pertussis (strain Tohama I / ATCC BAA-589 / NCTC 13251).